Consider the following 270-residue polypeptide: MEYIKKIALYMSVLLLIIFIGGCGNMKDEQKKEEQTNKTDSKEEQIKKSFAKTLDMYPIKNLEDLYDKEGYRDGEFKKGDKGMWTIYTDFAKSNKADELSNEGMVLYLDRNTRTAKGHYFVKTFYEKDKFPDRKKYKVEMKNNKIILLDKVEDPKLKKRIENFKFFGQYANLKELKNYNNGDVSINENVPSYDAKFKMSNKDENVKQLRSRYNIPTDKAPVLKMHIDGNLKGSSVGYKKLEIDFSKGEKSDLSVIDSLNFQPAKVDEDER.

An N-terminal signal peptide occupies residues 1-22 (MEYIKKIALYMSVLLLIIFIGG). Cys-23 carries N-palmitoyl cysteine lipidation. A lipid anchor (S-diacylglycerol cysteine) is attached at Cys-23.

It belongs to the staphylococcal tandem lipoprotein family.

The protein resides in the cell membrane. This is an uncharacterized protein from Staphylococcus aureus (strain MW2).